The following is a 138-amino-acid chain: Holo-[acyl-carrier-protein] synthase (138 aa).

Mg(2+) is bound by residues Asp-8 and Glu-56.

Belongs to the P-Pant transferase superfamily. AcpS family. Requires Mg(2+) as cofactor.

Its subcellular location is the cytoplasm. The catalysed reaction is apo-[ACP] + CoA = holo-[ACP] + adenosine 3',5'-bisphosphate + H(+). Functionally, transfers the 4'-phosphopantetheine moiety from coenzyme A to a Ser of acyl-carrier-protein. The protein is Holo-[acyl-carrier-protein] synthase of Clostridium novyi (strain NT).